Reading from the N-terminus, the 319-residue chain is ATP-dependent 6-phosphofructokinase (319 aa).

Position 11 (Gly11) interacts with ATP. Residue Arg21 to Arg25 coordinates ADP. ATP-binding positions include Arg72–Ser73 and Gly102–Ser105. Asp103 is a Mg(2+) binding site. Thr125–Asp127 contacts substrate. The Proton acceptor role is filled by Asp127. ADP is bound at residue Arg154. Substrate is bound by residues Arg162 and Met169 to Arg171. Residues Gly185–Glu187 and Lys213–His215 contribute to the ADP site. Substrate is bound by residues Glu222, Arg243, and His249–Arg252.

This sequence belongs to the phosphofructokinase type A (PFKA) family. ATP-dependent PFK group I subfamily. Prokaryotic clade 'B1' sub-subfamily. Homotetramer. The cofactor is Mg(2+).

Its subcellular location is the cytoplasm. The catalysed reaction is beta-D-fructose 6-phosphate + ATP = beta-D-fructose 1,6-bisphosphate + ADP + H(+). It participates in carbohydrate degradation; glycolysis; D-glyceraldehyde 3-phosphate and glycerone phosphate from D-glucose: step 3/4. Its activity is regulated as follows. Allosterically activated by ADP and other diphosphonucleosides, and allosterically inhibited by phosphoenolpyruvate. Functionally, catalyzes the phosphorylation of D-fructose 6-phosphate to fructose 1,6-bisphosphate by ATP, the first committing step of glycolysis. The sequence is that of ATP-dependent 6-phosphofructokinase from Clostridium tetani (strain Massachusetts / E88).